The primary structure comprises 140 residues: Zinc finger SWIM domain-containing protein 7 (140 aa).

The SWIM-type zinc finger occupies 76–114 (YTCFTSCHYCPCPAFSFTVLRRNESLMCKHLLAVILSQA).

This sequence belongs to the SWS1 family.

It is found in the nucleus. Its function is as follows. Involved in early stages of the homologous recombination repair (HRR) pathway of double-stranded DNA breaks arising during DNA replication or induced by DNA-damaging agents. This is Zinc finger SWIM domain-containing protein 7 (zswim7) from Danio rerio (Zebrafish).